The following is a 60-amino-acid chain: Large ribosomal subunit protein bL32 (60 aa).

Residues 1 to 23 are disordered; that stretch reads MAVPKRKKSKSRRNMHRSHHAIK.

Belongs to the bacterial ribosomal protein bL32 family.

This chain is Large ribosomal subunit protein bL32, found in Wolbachia sp. subsp. Brugia malayi (strain TRS).